The chain runs to 228 residues: MCINVCYLGEVEYQEALFIQERIWALRVEKKIGDTLLLLEHPPVITIGRRGSKKNILVSDEFLKKMDVKVFEVSRGGDVTYHGPGQLVGYPIFDLALTDRDIKKFVYLLEEVFIRLLKDQFGKEAHRDENKYTGVWVGNDKIVAIGIAVKKWVTMHGFAFNVNTNLEHFSWIVPCGLKDRGVTSLERLIGSTIRFEDVVDKVQTYFGKVFGKSLNILGKEKLFDLLKI.

Residues 30-214 enclose the BPL/LPL catalytic domain; that stretch reads KKIGDTLLLL…YFGKVFGKSL (185 aa). Substrate contacts are provided by residues 75–82, 144–146, and 157–159; these read RGGDVTYH, AIG, and GFA. Residue Cys-175 is the Acyl-thioester intermediate of the active site.

This sequence belongs to the LipB family.

It localises to the cytoplasm. It catalyses the reaction octanoyl-[ACP] + L-lysyl-[protein] = N(6)-octanoyl-L-lysyl-[protein] + holo-[ACP] + H(+). Its pathway is protein modification; protein lipoylation via endogenous pathway; protein N(6)-(lipoyl)lysine from octanoyl-[acyl-carrier-protein]: step 1/2. Catalyzes the transfer of endogenously produced octanoic acid from octanoyl-acyl-carrier-protein onto the lipoyl domains of lipoate-dependent enzymes. Lipoyl-ACP can also act as a substrate although octanoyl-ACP is likely to be the physiological substrate. The protein is Octanoyltransferase of Caldicellulosiruptor bescii (strain ATCC BAA-1888 / DSM 6725 / KCTC 15123 / Z-1320) (Anaerocellum thermophilum).